The following is a 218-amino-acid chain: MTGISLALKPRQVFGNKNKLIRAQGLTPVHIFGHGLKSLALQADTLELESTINRAGSSHLVNIKLDTDKKTRKVFIREIQRNPIKGYLEHVDFYQINLKEKVTAEIPIHFSGESSLLKEKGHKLIAPFTHLTVEALPDDLPPEIHIDLSQFDTLEKDLYIKDIILPGGAKILNEADLLVAKVSEVHLKVETTVAVNPAEESGEKPVAHIEEKESTEKE.

The tract at residues 197-218 is disordered; the sequence is PAEESGEKPVAHIEEKESTEKE. The span at 201 to 218 shows a compositional bias: basic and acidic residues; it reads SGEKPVAHIEEKESTEKE.

This sequence belongs to the bacterial ribosomal protein bL25 family. CTC subfamily. As to quaternary structure, part of the 50S ribosomal subunit; part of the 5S rRNA/L5/L18/L25 subcomplex. Contacts the 5S rRNA. Binds to the 5S rRNA independently of L5 and L18.

This is one of the proteins that binds to the 5S RNA in the ribosome where it forms part of the central protuberance. This chain is Large ribosomal subunit protein bL25, found in Dehalococcoides mccartyi (strain ATCC BAA-2100 / JCM 16839 / KCTC 5957 / BAV1).